The following is a 384-amino-acid chain: Prokineticin receptor 2 (384 aa).

The Extracellular portion of the chain corresponds to 1-53 (MAAQNGNASFPANFSIPQEHASSLPFNFSYDDYDLPLDEDEDMTKTQTFFAAK). N7, N13, and N27 each carry an N-linked (GlcNAc...) asparagine glycan. Residues 54-74 (IVIGVALVGIMLTCGIGNFVF) form a helical membrane-spanning segment. Residues 75-89 (ITALTRYKKLRNLTN) are Cytoplasmic-facing. The helical transmembrane segment at 90-110 (LLIANLAISDFLVAIICCPFE) threads the bilayer. Over 111–137 (MDYYVVHQLSWEHGHVLCACINYLRTV) the chain is Extracellular. C128 and C208 are disulfide-bonded. A helical membrane pass occupies residues 138–158 (SLYVSTNALLAIAIDRYLAIV). Residues 159–171 (HPLKPRMNYQTAS) lie on the Cytoplasmic side of the membrane. Residues 172–192 (FLIALVWMVSILISIPSAYFT) form a helical membrane-spanning segment. Over 193 to 223 (KETVLFIVKNQKKIFCGQVWPVDQQLYYKSY) the chain is Extracellular. The chain crosses the membrane as a helical span at residues 224–244 (FLFVFGIEFLGPVFTMTLCYA). Topologically, residues 245 to 273 (RISRELWFKAVPGFQTEQIRKRLRCRRKT) are cytoplasmic. A helical transmembrane segment spans residues 274 to 294 (VLVLMCILTAYVLCWAPFYGF). The Extracellular portion of the chain corresponds to 295–313 (TIVRDFFPTVFVKEKHYLT). The helical transmembrane segment at 314–334 (AFYVVECIAMSNSMINTVCFV) threads the bilayer. Over 335-384 (TVKNSTMKYFKKMLLLHWRPSHHGSKSSADLDLKTSRLPATEEVDCIRLK) the chain is Cytoplasmic.

The protein belongs to the G-protein coupled receptor 1 family. Homodimer.

The protein localises to the cell membrane. Receptor for prokineticin 2. Exclusively coupled to the G(q) subclass of heteromeric G proteins. Activation leads to mobilization of calcium, stimulation of phosphoinositide turnover and activation of p44/p42 mitogen-activated protein kinase. This chain is Prokineticin receptor 2 (PROKR2), found in Bos taurus (Bovine).